The following is a 576-amino-acid chain: A-type ATP synthase subunit A (576 aa).

An ATP-binding site is contributed by 228–235; sequence GGFGTGKT.

Belongs to the ATPase alpha/beta chains family. As to quaternary structure, has multiple subunits with at least A(3), B(3), C, D, E, F, H, I and proteolipid K(x).

It is found in the cell membrane. The catalysed reaction is ATP + H2O + 4 H(+)(in) = ADP + phosphate + 5 H(+)(out). Its function is as follows. Component of the A-type ATP synthase that produces ATP from ADP in the presence of a proton gradient across the membrane. The A chain is the catalytic subunit. This is A-type ATP synthase subunit A from Methanothrix thermoacetophila (strain DSM 6194 / JCM 14653 / NBRC 101360 / PT) (Methanosaeta thermophila).